The following is a 383-amino-acid chain: UDP-N-acetylenolpyruvoylglucosamine reductase (383 aa).

The 171-residue stretch at 42 to 212 folds into the FAD-binding PCMH-type domain; that stretch reads LSCQAMQLIT…TRVGFKLHKD (171 aa). R189 is a catalytic residue. S267 serves as the catalytic Proton donor. The active site involves E369.

This sequence belongs to the MurB family. Requires FAD as cofactor.

Its subcellular location is the cytoplasm. The catalysed reaction is UDP-N-acetyl-alpha-D-muramate + NADP(+) = UDP-N-acetyl-3-O-(1-carboxyvinyl)-alpha-D-glucosamine + NADPH + H(+). It functions in the pathway cell wall biogenesis; peptidoglycan biosynthesis. Its function is as follows. Cell wall formation. In Psychrobacter sp. (strain PRwf-1), this protein is UDP-N-acetylenolpyruvoylglucosamine reductase.